Reading from the N-terminus, the 545-residue chain is Afadin- and alpha-actinin-binding protein B (545 aa).

2 coiled-coil regions span residues 106–287 (RSKE…SQRK) and 358–442 (ARGD…AIRL). The segment at 497-545 (HDRHLASSGDHYQRPRKTLPITPSSKHSLTQRESVAWRDSSISPNGTDF) is disordered. Composition is skewed to polar residues over residues 517–529 (ITPSSKHSLTQRE) and 536–545 (SSISPNGTDF).

This sequence belongs to the ADIP family. Interacts with WRAP73.

Its subcellular location is the cell junction. It is found in the adherens junction. The protein resides in the cytoplasm. The protein localises to the cytoskeleton. It localises to the microtubule organizing center. Its subcellular location is the centrosome. It is found in the centriolar satellite. Belongs to an adhesion system, which plays a role in the organization of homotypic, interneuronal and heterotypic cell-cell adherens junctions (AJs). Involved in cell movement. Acts as a centrosome maturation factor, probably by maintaining the integrity of the pericentriolar material and proper microtubule nucleation at mitotic spindle poles. The function seems to implicate at least in part WRAP73; the SSX2IP:WRAP73 complex is proposed to act as regulator of spindle anchoring at the mitotic centrosome. This is Afadin- and alpha-actinin-binding protein B (ssx2ip-b) from Xenopus laevis (African clawed frog).